Consider the following 426-residue polypeptide: UPF0229 protein Csal_0882 (426 aa).

A compositionally biased stretch (basic and acidic residues) spans 82-93 (FVEGDRLRRPGG). The interval 82-109 (FVEGDRLRRPGGEGRGGSGEGSASNQGE) is disordered.

It belongs to the UPF0229 family.

The polypeptide is UPF0229 protein Csal_0882 (Chromohalobacter salexigens (strain ATCC BAA-138 / DSM 3043 / CIP 106854 / NCIMB 13768 / 1H11)).